A 138-amino-acid chain; its full sequence is MQAHNLVYFSSVSENTHRFVQKLGVPAMRIPLHSRIEVSDPYVLVLPTYGGGRTAPDLQAGGYVPKQVIAFLNNEYNRALICGVVAAGNTNFGAEFCYAGDVVARKCGVPYLYRFELMGTEDDVTAVRAGLANLWKEH.

It belongs to the NrdI family.

Probably involved in ribonucleotide reductase function. This chain is Protein NrdI, found in Mycobacterium leprae (strain TN).